A 394-amino-acid polypeptide reads, in one-letter code: Elongation factor Tu (394 aa).

Residues 10 to 204 (KPHVNVGTIG…ALDTYIPEPE (195 aa)) form the tr-type G domain. Residues 19–26 (GHVDHGKT) form a G1 region. GTP is bound at residue 19–26 (GHVDHGKT). A Mg(2+)-binding site is contributed by Thr26. A G2 region spans residues 60 to 64 (GITIN). The tract at residues 81–84 (DCPG) is G3. GTP is bound by residues 81–85 (DCPGH) and 136–139 (NKCD). A G4 region spans residues 136-139 (NKCD). The tract at residues 174–176 (SAL) is G5.

The protein belongs to the TRAFAC class translation factor GTPase superfamily. Classic translation factor GTPase family. EF-Tu/EF-1A subfamily. As to quaternary structure, monomer.

The protein localises to the cytoplasm. It catalyses the reaction GTP + H2O = GDP + phosphate + H(+). Its function is as follows. GTP hydrolase that promotes the GTP-dependent binding of aminoacyl-tRNA to the A-site of ribosomes during protein biosynthesis. This is Elongation factor Tu from Shewanella pealeana (strain ATCC 700345 / ANG-SQ1).